The chain runs to 780 residues: ATP-dependent 6-phosphofructokinase, liver type (780 aa).

Residue Ala-2 is modified to N-acetylalanine. An N-terminal catalytic PFK domain 1 region spans residues 2–390 (AAVDLEKLRA…NWNIYKLLAH (389 aa)). ATP contacts are provided by residues Gly-25, 88 to 89 (RC), and 118 to 121 (GDGS). A Mg(2+)-binding site is contributed by Asp-119. Residues 164–166 (SID), Arg-201, 208–210 (MGR), Glu-264, Arg-292, and 298–301 (HVQR) contribute to the substrate site. Asp-166 functions as the Proton acceptor in the catalytic mechanism. Position 377 is a phosphoserine (Ser-377). The segment at 391–400 (QKPPKEKSNF) is interdomain linker. Residues 401-780 (SLAILNVGAP…RRTLSMDKGF (380 aa)) form a C-terminal regulatory PFK domain 2 region. Beta-D-fructose 2,6-bisphosphate contacts are provided by residues Arg-470, 527–531 (TISNN), Arg-565, 572–574 (MGG), and Glu-628. Residue Ser-529 is glycosylated (O-linked (GlcNAc) serine). Tyr-640 carries the phosphotyrosine modification. Residues Arg-654, 660–663 (HLQQ), and Arg-734 contribute to the beta-D-fructose 2,6-bisphosphate site. A Phosphoserine modification is found at Ser-775.

This sequence belongs to the phosphofructokinase type A (PFKA) family. ATP-dependent PFK group I subfamily. Eukaryotic two domain clade 'E' sub-subfamily. In terms of assembly, homo- and heterotetramers. Phosphofructokinase (PFK) enzyme functions as a tetramer composed of different combinations of 3 types of subunits, called PFKM (where M stands for Muscle), PFKL (Liver) and PFKP (Platelet). The composition of the PFK tetramer differs according to the tissue type it is present in. In muscles, it is composed of 4 PFKM subunits (also called M4). In the liver, the predominant form is a tetramer of PFKL subunits (L4). In erythrocytes, both PFKM and PFKL subunits randomly tetramerize to form M4, L4 and other combinations (ML3, M2L2, M3L). The kinetic and regulatory properties of the tetrameric enzyme are dependent on the subunit composition, hence can vary across tissues. The cofactor is Mg(2+). In terms of processing, glcNAcylation at Ser-529 by OGT decreases enzyme activity, leading to redirect glucose flux through the oxidative pentose phosphate pathway. Glycosylation is stimulated by both hypoxia and glucose deprivation.

Its subcellular location is the cytoplasm. The catalysed reaction is beta-D-fructose 6-phosphate + ATP = beta-D-fructose 1,6-bisphosphate + ADP + H(+). It functions in the pathway carbohydrate degradation; glycolysis; D-glyceraldehyde 3-phosphate and glycerone phosphate from D-glucose: step 3/4. Its activity is regulated as follows. Allosterically activated by ADP, AMP, or fructose 2,6-bisphosphate, and allosterically inhibited by ATP or citrate. GlcNAcylation by OGT overcomes allosteric regulation. Its function is as follows. Catalyzes the phosphorylation of D-fructose 6-phosphate to fructose 1,6-bisphosphate by ATP, the first committing step of glycolysis. Negatively regulates the phagocyte oxidative burst in response to bacterial infection by controlling cellular NADPH biosynthesis and NADPH oxidase-derived reactive oxygen species. Upon macrophage activation, drives the metabolic switch toward glycolysis, thus preventing glucose turnover that produces NADPH via pentose phosphate pathway. The chain is ATP-dependent 6-phosphofructokinase, liver type from Homo sapiens (Human).